A 490-amino-acid polypeptide reads, in one-letter code: Cytochrome P450 2C55 (490 aa).

Position 435 (Cys-435) interacts with heme.

It belongs to the cytochrome P450 family. Heme serves as cofactor.

It is found in the endoplasmic reticulum membrane. The protein resides in the microsome membrane. The enzyme catalyses an organic molecule + reduced [NADPH--hemoprotein reductase] + O2 = an alcohol + oxidized [NADPH--hemoprotein reductase] + H2O + H(+). In terms of biological role, metabolizes arachidonic acid mainly to 19-hydroxyeicosatetraenoic acid (HETE). The chain is Cytochrome P450 2C55 (Cyp2c55) from Rattus norvegicus (Rat).